A 107-amino-acid polypeptide reads, in one-letter code: UPF0145 protein BT_3410 (107 aa).

It belongs to the UPF0145 family.

The sequence is that of UPF0145 protein BT_3410 from Bacteroides thetaiotaomicron (strain ATCC 29148 / DSM 2079 / JCM 5827 / CCUG 10774 / NCTC 10582 / VPI-5482 / E50).